A 454-amino-acid chain; its full sequence is Venom prothrombin activator porpharin-D (454 aa).

Residues 1–20 form the signal peptide; it reads MAPQLLLCLILTFLWSLPEA. Residues 21–40 constitute a propeptide that is removed on maturation; that stretch reads ESNVFLKSKEANRFLQRTKR. The 46-residue stretch at 41-86 folds into the Gla domain; the sequence is SNSLFEEFRPGNIERECIEEKCSKEEAREIFKDNEKTEAFWNVYVD. 4-carboxyglutamate is present on residues glutamate 46, glutamate 47, glutamate 54, glutamate 56, glutamate 59, glutamate 60, glutamate 65, glutamate 66, glutamate 69, and glutamate 75. A disulfide bond links cysteine 57 and cysteine 62. The region spanning 86–122 is the EGF-like 1; calcium-binding domain; it reads DGDQCSSNPCHYGGTCKDGIGSYTCTCLPNYEGKNCE. Intrachain disulfides connect cysteine 90–cysteine 101, cysteine 95–cysteine 110, cysteine 112–cysteine 121, cysteine 129–cysteine 140, cysteine 136–cysteine 149, cysteine 151–cysteine 164, cysteine 172–cysteine 316, cysteine 216–cysteine 221, cysteine 236–cysteine 252, cysteine 364–cysteine 378, and cysteine 389–cysteine 417. Serine 92 is a glycosylation site (O-linked (Hex...) serine). Residues 129–164 enclose the EGF-like 2 domain; the sequence is CRFFNGNCWHFCKPVQNDTQCSCAESYRLGDDGHSC. Positions 182-209 are cleaved as a propeptide — activation peptide; that stretch reads REASLPDFVQSQNATLLKKSDNPSPDIR. Positions 210–441 constitute a Peptidase S1 domain; it reads IINGMDCKLG…FIPWIKAVMR (232 aa). Catalysis depends on charge relay system residues histidine 251 and aspartate 296. The active-site Charge relay system is serine 393.

The protein belongs to the peptidase S1 family. Snake venom subfamily. In terms of assembly, heterodimer of a light chain and a heavy chain; disulfide-linked. In terms of processing, the vitamin K-dependent, enzymatic carboxylation of some glutamate residues allows the modified protein to bind calcium. As to expression, expressed by the venom gland.

The protein resides in the secreted. The enzyme catalyses Selective cleavage of Arg-|-Thr and then Arg-|-Ile bonds in prothrombin to form thrombin.. Its function is as follows. Snake prothrombin activator that attacks the hemostatic system of prey. This protein is functionally similar to blood coagulation factor Xa. The chain is Venom prothrombin activator porpharin-D from Pseudechis porphyriacus (Red-bellied black snake).